Reading from the N-terminus, the 2004-residue chain is Immunoglobulin A1 protease (2004 aa).

The first 42 residues, 1 to 42 (MEKYFGEKQERFSFRKLSVGLVSATISSLFFMSVLASSSVDA), serve as a signal peptide directing secretion. The propeptide occupies 43 to 99 (QETAGVHYKYVADSELSSEEKKQLVYDIPTYVENDDETYYLVYKLNSQNQLAELPNT). Residues 96 to 100 (LPNTG) carry the LPXTG sorting signal motif. Threonine 99 carries the pentaglycyl murein peptidoglycan amidated threonine modification. 2 helical membrane passes run 106–125 (QALVAGASLAAMGILIFAVS) and 132–154 (KTVLHLVLVAGIGNGVLVSVHAL). Over 155–2004 (ENHLLLNYNT…FRSSIFENKK (1850 aa)) the chain is Extracellular. 4 disordered regions span residues 194-213 (TTSESEVSNQKSSVATPTKQ), 235-305 (QEQT…NPQD), 373-394 (EIVSTSTTAPSPRIVEKGTKKT), and 422-720 (PELP…PEKT). Polar residues-rich tracts occupy residues 197–213 (ESEVSNQKSSVATPTKQ) and 235–246 (QEQTPVSSTKPT). The span at 276–296 (LAEHKNLETKKEEKISPKEKT) shows a compositional bias: basic and acidic residues. In terms of domain architecture, G5 spans 314 to 393 (KPELLYREET…PRIVEKGTKK (80 aa)). Repeat copies occupy residues 419 to 435 (AIQPELPEAVVSDKGEP), 436 to 452 (EVQPTLPEAVVTDKGET), and 453 to 469 (EVQPESPDTVVSDKGEP). The interval 419–469 (AIQPELPEAVVSDKGEPEVQPTLPEAVVTDKGETEVQPESPDTVVSDKGEP) is 3 X 17 AA approximate tandem repeats. Over residues 485–511 (VKPETPVEKTKEQGPEKTEEVPVKPTE) the composition is skewed to basic and acidic residues. Composition is skewed to polar residues over residues 516 to 529 (NPNEGTTEGTSIQE) and 538 to 572 (EESTTNSEKVSPDTSSKNTGEVSSNPSDSTTSVGE). The segment covering 574–591 (NKPEHNDSKNENSEKTVE) has biased composition (basic and acidic residues). Composition is skewed to polar residues over residues 618 to 639 (EETQTNSGKIANENTGEVSNKP) and 648 to 681 (ESNQPEKNGTATKPENSGNTTSENGQTEPEPSNG). Low complexity predominate over residues 682–699 (NSTEDVSTESNTSNSNGN). Residues 700-720 (EEIKQENELDPDKKVEEPEKT) show a composition bias toward basic and acidic residues. A Zn(2+)-binding site is contributed by histidine 1645. The active site involves glutamate 1646. 2 residues coordinate Zn(2+): histidine 1649 and glutamate 1669.

It belongs to the peptidase M26 family. Zn(2+) is required as a cofactor. Post-translationally, the Gram-positive cell-wall anchor motif LPXTG is located in the N-terminal part, in contrast to such motifs in other known streptococcal and staphylococcal proteins. The protease could be cleaved by the sortase and anchored in the membrane via the two potential N-terminal transmembrane domains, whereas the propeptide located prior to the LPXTG motif would remain attached to the cell wall peptidoglycan by an amide bond.

It localises to the secreted. Its subcellular location is the cell wall. The protein localises to the membrane. It catalyses the reaction Cleavage of Pro-|-Thr bond in the hinge region of the heavy chain of human IgA.. Its function is as follows. Zinc metalloproteinase which cleaves human immunoglobulin A1 (IgA1) in the hinge region, rendering it less efficient in coating the surface of colonizing or invading pneumococci. Strongly contributes to virulence in mice. May be responsible for pneumococcal infection and is potentially involved in distinct stages of pneumococcal disease. The sequence is that of Immunoglobulin A1 protease (iga) from Streptococcus pneumoniae serotype 4 (strain ATCC BAA-334 / TIGR4).